A 666-amino-acid chain; its full sequence is tRNA 5-methylaminomethyl-2-thiouridine biosynthesis bifunctional protein MnmC (666 aa).

A tRNA (mnm(5)s(2)U34)-methyltransferase region spans residues Met-1 to Glu-253. The segment at Val-283–Pro-666 is FAD-dependent cmnm(5)s(2)U34 oxidoreductase.

It in the N-terminal section; belongs to the methyltransferase superfamily. tRNA (mnm(5)s(2)U34)-methyltransferase family. This sequence in the C-terminal section; belongs to the DAO family. It depends on FAD as a cofactor.

The protein resides in the cytoplasm. It catalyses the reaction 5-aminomethyl-2-thiouridine(34) in tRNA + S-adenosyl-L-methionine = 5-methylaminomethyl-2-thiouridine(34) in tRNA + S-adenosyl-L-homocysteine + H(+). In terms of biological role, catalyzes the last two steps in the biosynthesis of 5-methylaminomethyl-2-thiouridine (mnm(5)s(2)U) at the wobble position (U34) in tRNA. Catalyzes the FAD-dependent demodification of cmnm(5)s(2)U34 to nm(5)s(2)U34, followed by the transfer of a methyl group from S-adenosyl-L-methionine to nm(5)s(2)U34, to form mnm(5)s(2)U34. This is tRNA 5-methylaminomethyl-2-thiouridine biosynthesis bifunctional protein MnmC from Legionella pneumophila subsp. pneumophila (strain Philadelphia 1 / ATCC 33152 / DSM 7513).